The chain runs to 491 residues: Cytochrome P450 2B9 (491 aa).

A Phosphoserine; by PKA modification is found at S128. Residue C436 participates in heme binding.

The protein belongs to the cytochrome P450 family. The cofactor is heme.

Its subcellular location is the endoplasmic reticulum membrane. It is found in the microsome membrane. The enzyme catalyses an organic molecule + reduced [NADPH--hemoprotein reductase] + O2 = an alcohol + oxidized [NADPH--hemoprotein reductase] + H2O + H(+). Its function is as follows. Cytochromes P450 are a group of heme-thiolate monooxygenases. In liver microsomes, this enzyme is involved in an NADPH-dependent electron transport pathway. It oxidizes a variety of structurally unrelated compounds, including steroids, fatty acids, and xenobiotics. The polypeptide is Cytochrome P450 2B9 (Cyp2b9) (Mus musculus (Mouse)).